Consider the following 373-residue polypeptide: NADH-quinone oxidoreductase subunit D (373 aa).

The protein belongs to the complex I 49 kDa subunit family. As to quaternary structure, NDH-1 is composed of 14 different subunits. Subunits NuoB, C, D, E, F, and G constitute the peripheral sector of the complex.

It localises to the cell inner membrane. The enzyme catalyses a quinone + NADH + 5 H(+)(in) = a quinol + NAD(+) + 4 H(+)(out). Its function is as follows. NDH-1 shuttles electrons from NADH, via FMN and iron-sulfur (Fe-S) centers, to quinones in the respiratory chain. The immediate electron acceptor for the enzyme in this species is believed to be ubiquinone. Couples the redox reaction to proton translocation (for every two electrons transferred, four hydrogen ions are translocated across the cytoplasmic membrane), and thus conserves the redox energy in a proton gradient. The protein is NADH-quinone oxidoreductase subunit D of Syntrophobacter fumaroxidans (strain DSM 10017 / MPOB).